The primary structure comprises 109 residues: COX assembly mitochondrial protein 2 (109 aa).

Residues 10–54 form the CHCH domain; sequence FHSCLDFINALDKCHQKEYYKRIFGLCNNEKDALNKCLKEASLNN. Short sequence motifs (cx9C motif) lie at residues 13-23 and 36-46; these read CLDFINALDKC and CNNEKDALNKC. 2 cysteine pairs are disulfide-bonded: Cys13/Cys46 and Cys23/Cys36.

The protein belongs to the CMC family. As to quaternary structure, interacts with CMC1.

The protein localises to the mitochondrion inner membrane. The protein resides in the mitochondrion intermembrane space. Required for mitochondrial cytochrome c oxidase (COX) assembly and respiration. May be involved in copper trafficking and distribution to mitochondrial COX and SOD1. In Saccharomyces cerevisiae (strain ATCC 204508 / S288c) (Baker's yeast), this protein is COX assembly mitochondrial protein 2 (CMC2).